A 74-amino-acid polypeptide reads, in one-letter code: Cytochrome c oxidase assembly factor 5 (74 aa).

The 39-residue stretch at 27 to 65 (QSACVLQEGKSPRQCLKEGNCRALQYSFFECKRSMLDAR) folds into the CHCH domain. The Cx10C motif signature appears at 30-41 (CVLQEGKSPRQC). Cystine bridges form between C30–C57 and C41–C47. S37 carries the phosphoserine modification. The Cx9C motif signature appears at 47 to 57 (CRALQYSFFEC).

It belongs to the PET191 family.

Its function is as follows. Involved in an early step of the mitochondrial complex IV assembly process. This chain is Cytochrome c oxidase assembly factor 5 (Coa5), found in Mus musculus (Mouse).